Reading from the N-terminus, the 274-residue chain is Diaminopimelate epimerase (274 aa).

The substrate site is built by N11, Q44, and N64. The active-site Proton donor is the C73. Residues 74–75 (GN), N157, N190, and 208–209 (ER) contribute to the substrate site. C217 (proton acceptor) is an active-site residue. Substrate is bound at residue 218–219 (GS).

This sequence belongs to the diaminopimelate epimerase family. Homodimer.

Its subcellular location is the cytoplasm. It catalyses the reaction (2S,6S)-2,6-diaminopimelate = meso-2,6-diaminopimelate. The protein operates within amino-acid biosynthesis; L-lysine biosynthesis via DAP pathway; DL-2,6-diaminopimelate from LL-2,6-diaminopimelate: step 1/1. In terms of biological role, catalyzes the stereoinversion of LL-2,6-diaminopimelate (L,L-DAP) to meso-diaminopimelate (meso-DAP), a precursor of L-lysine and an essential component of the bacterial peptidoglycan. This chain is Diaminopimelate epimerase, found in Cronobacter sakazakii (strain ATCC BAA-894) (Enterobacter sakazakii).